A 358-amino-acid polypeptide reads, in one-letter code: MSAAALKNDVFLRALLRQPVPYTPIWLMRQAGRYLPEYNATRARAGSFMGLAQNPDYAAEVTLQPLARYDLDAAILFSDILTVPHAMGLGLDFAPGEGPRFARPLRTEDDVARLAVPDMESLRYVFDAVAVIRRELDGKVPLIGFAGSPWTIACYMVEGRGSDDYRLIKTMLYARPDLLHRILEVNAQATLQYLNAQIQAGAQAVMLFDSWGGVLADGLFQQFSLAYTRKVVAGLIREHQGRRVPAIVFTKGGGQWLEAIAACGCDAIGLDWTVNLGQARQRTGDAVALQGNLDPMTLFGGSEAIRAEARRTLDAFGPVGTGGHVFNLGHGISQYTPPEAVAELVDEVHTYSRALHAK.

Substrate-binding positions include 29–33 (RQAGR), aspartate 79, tyrosine 155, serine 210, and histidine 330.

This sequence belongs to the uroporphyrinogen decarboxylase family. Homodimer.

Its subcellular location is the cytoplasm. The catalysed reaction is uroporphyrinogen III + 4 H(+) = coproporphyrinogen III + 4 CO2. Its pathway is porphyrin-containing compound metabolism; protoporphyrin-IX biosynthesis; coproporphyrinogen-III from 5-aminolevulinate: step 4/4. In terms of biological role, catalyzes the decarboxylation of four acetate groups of uroporphyrinogen-III to yield coproporphyrinogen-III. The chain is Uroporphyrinogen decarboxylase from Bordetella petrii (strain ATCC BAA-461 / DSM 12804 / CCUG 43448).